The primary structure comprises 214 residues: MQHEKALVVFSGGQDSTTCLFWAKQQFSHVEAVTFAYGQRHDAEIEVAKEIAAELDVPHHILDLSLLGQLTSNALTRHDLDIDNADVPNTFVDGRNHLFLSFAAVMAKQLGMHHIVTGVCETDFSGYPDCRDQFIKSLNVTLNLAMDYPFVIDTPLMWLDKKETWALADELGAFDYVKERTLTCYNGVIGSGCGECPACKLRQNGLTAYEEVRV.

Phenylalanine 10–leucine 20 lines the ATP pocket. The Zn(2+) site is built by cysteine 184, cysteine 193, cysteine 196, and cysteine 199.

Belongs to the QueC family. Homodimer. Zn(2+) is required as a cofactor.

The enzyme catalyses 7-carboxy-7-deazaguanine + NH4(+) + ATP = 7-cyano-7-deazaguanine + ADP + phosphate + H2O + H(+). The protein operates within purine metabolism; 7-cyano-7-deazaguanine biosynthesis. Functionally, catalyzes the ATP-dependent conversion of 7-carboxy-7-deazaguanine (CDG) to 7-cyano-7-deazaguanine (preQ(0)). This is 7-cyano-7-deazaguanine synthase from Exiguobacterium sp. (strain ATCC BAA-1283 / AT1b).